The primary structure comprises 736 residues: ABC transporter G family member 16 (736 aa).

The ABC transporter domain occupies 88 to 332 (LDFHDLVPWR…FAGFGNPIPE (245 aa)). Residue 125-132 (GASGSGKS) coordinates ATP. Transmembrane regions (helical) follow at residues 410-430 (SVIN…PFWI), 449-469 (LLGM…TVFW), 484-504 (FFAF…PVFL), 525-545 (VLSH…AFAV), 569-589 (ASFW…PHVM), 590-610 (LGYT…GFFI), and 709-729 (LLIT…CLLL). Residues 430–640 (IEIKTLTRRS…PYEAVLQNEF (211 aa)) form the ABC transmembrane type-2 domain.

Belongs to the ABC transporter superfamily. ABCG family. Eye pigment precursor importer (TC 3.A.1.204) subfamily.

It localises to the membrane. In Arabidopsis thaliana (Mouse-ear cress), this protein is ABC transporter G family member 16 (ABCG16).